The following is a 377-amino-acid chain: 3-dehydroquinate synthase (377 aa).

NAD(+) contacts are provided by residues 115–119, 139–140, lysine 152, and lysine 161; these read GVIGD and TS. Residues glutamate 194, histidine 256, and histidine 275 each contribute to the Zn(2+) site.

Belongs to the sugar phosphate cyclases superfamily. Dehydroquinate synthase family. The cofactor is NAD(+). Co(2+) serves as cofactor. Requires Zn(2+) as cofactor.

Its subcellular location is the cytoplasm. The catalysed reaction is 7-phospho-2-dehydro-3-deoxy-D-arabino-heptonate = 3-dehydroquinate + phosphate. The protein operates within metabolic intermediate biosynthesis; chorismate biosynthesis; chorismate from D-erythrose 4-phosphate and phosphoenolpyruvate: step 2/7. Functionally, catalyzes the conversion of 3-deoxy-D-arabino-heptulosonate 7-phosphate (DAHP) to dehydroquinate (DHQ). This Agrobacterium fabrum (strain C58 / ATCC 33970) (Agrobacterium tumefaciens (strain C58)) protein is 3-dehydroquinate synthase.